The chain runs to 234 residues: Preflagellin peptidase (234 aa).

Residue Met-1 is a topological domain, cytoplasmic. Residues 2 to 18 (INFIVGAIGLLIASIYD) traverse the membrane as a helical segment. Topologically, residues 19–23 (LKSRE) are extracellular. Residues 24–46 (IEDYVWVSMVIFGLIYNGYLSFI) traverse the membrane as a helical segment. Residues 47 to 49 (SHD) lie on the Cytoplasmic side of the membrane. The helical transmembrane segment at 50–72 (MLYVIQSIVGFIVCFFLGFFMFL) threads the bilayer. Residues 73 to 78 (LGVGGG) are Extracellular-facing. The helical transmembrane segment at 79-89 (DGKLIMGLGAL) threads the bilayer. Residues 90-110 (IPKYNMPIHTPLGAILNYLYL) are Cytoplasmic-facing. The chain crosses the membrane as a helical span at residues 111 to 139 (PSFPIMVVINAMFFSITLPIIIFLRNVIR). The Extracellular portion of the chain corresponds to 140-205 (GVKPKTKKEV…EEIWVTPAIP (66 aa)). The helical transmembrane segment at 206-217 (FVVPIFLSYLLT) threads the bilayer. At 218 to 234 (SIIGDKIIGIFLSVFGL) the chain is on the cytoplasmic side.

This sequence belongs to the peptidase A24 family. Archaeal preflagellin peptidase subfamily.

It localises to the cell membrane. It carries out the reaction Cleaves the signal peptide of 3 to 12 amino acids from the N-terminal of preflagellin, usually at Arg-Gly-|- or Lys-Gly-|-, to release flagellin.. Functionally, cleaves the N-terminal leader peptide from preflagellins. This Methanocaldococcus jannaschii (strain ATCC 43067 / DSM 2661 / JAL-1 / JCM 10045 / NBRC 100440) (Methanococcus jannaschii) protein is Preflagellin peptidase (flaK).